Reading from the N-terminus, the 775-residue chain is Subtilisin-like protease SBT3.8 (775 aa).

A signal peptide spans 1–26; that stretch reads MKSCRTLIFVAIILNGLSTFVAHAGA. A propeptide spans 27 to 109 (activation peptide); sequence ESKVHIVYLG…VTPDSFYQLD (83 aa). The region spanning 30–108 is the Inhibitor I9 domain; it reads VHIVYLGEKQ…HVTPDSFYQL (79 aa). Residues 113-622 form the Peptidase S8 domain; the sequence is TWDYLGLSVA…GGLVNPEKAA (510 aa). A glycan (N-linked (GlcNAc...) asparagine) is linked at asparagine 129. Aspartate 143 acts as the Charge relay system in catalysis. N-linked (GlcNAc...) asparagine glycosylation is found at asparagine 174 and asparagine 202. Residue histidine 218 is the Charge relay system of the active site. A PA domain is found at 384-476; it reads SLVYPENPGN…VDYELGTDIL (93 aa). Asparagine 395, asparagine 410, and asparagine 538 each carry an N-linked (GlcNAc...) asparagine glycan. The active-site Charge relay system is the serine 553. Asparagine 645, asparagine 721, and asparagine 756 each carry an N-linked (GlcNAc...) asparagine glycan.

It belongs to the peptidase S8 family.

The protein resides in the secreted. The sequence is that of Subtilisin-like protease SBT3.8 from Arabidopsis thaliana (Mouse-ear cress).